The chain runs to 365 residues: Ribosomal RNA large subunit methyltransferase F (365 aa).

The disordered stretch occupies residues 1–49 (MSKPAVKSVQSATAKTATRAVNIRQKVKAPKQAKPEAKGRVRPSKDKPR). The segment covering 33–49 (AKPEAKGRVRPSKDKPR) has biased composition (basic and acidic residues).

This sequence belongs to the methyltransferase superfamily. METTL16/RlmF family.

The protein resides in the cytoplasm. It catalyses the reaction adenosine(1618) in 23S rRNA + S-adenosyl-L-methionine = N(6)-methyladenosine(1618) in 23S rRNA + S-adenosyl-L-homocysteine + H(+). Its function is as follows. Specifically methylates the adenine in position 1618 of 23S rRNA. This is Ribosomal RNA large subunit methyltransferase F from Shewanella baltica (strain OS185).